A 20-amino-acid chain; its full sequence is Cupiennin-6f (20 aa).

As to expression, expressed by the venom gland.

It is found in the secreted. In Cupiennius salei (American wandering spider), this protein is Cupiennin-6f.